The primary structure comprises 833 residues: Translation initiation factor IF-2 (833 aa).

A disordered region spans residues 1–247 (MTEDVKKADG…ALQQAFTKPA (247 aa)). Basic and acidic residues-rich tracts occupy residues 53 to 99 (QKAE…EAKK) and 110 to 152 (VDVE…RYAE). Acidic residues predominate over residues 153-166 (LSEEDAENENSEDY). A compositionally biased stretch (basic residues) spans 187–203 (KENRNRGGKNKVAKAKK). The segment covering 204–227 (GGREDESSKTERESNRRNQKDGKM) has biased composition (basic and acidic residues). The tr-type G domain maps to 333 to 502 (TRAPVVTIMG…LLQSEVLELT (170 aa)). The segment at 342-349 (GHVDHGKT) is G1. Residue 342–349 (GHVDHGKT) participates in GTP binding. The interval 367-371 (GITQH) is G2. The segment at 388 to 391 (DTPG) is G3. Residues 388–392 (DTPGH) and 442–445 (NKID) contribute to the GTP site. The segment at 442-445 (NKID) is G4. A G5 region spans residues 478-480 (SAK).

This sequence belongs to the TRAFAC class translation factor GTPase superfamily. Classic translation factor GTPase family. IF-2 subfamily.

The protein localises to the cytoplasm. Its function is as follows. One of the essential components for the initiation of protein synthesis. Protects formylmethionyl-tRNA from spontaneous hydrolysis and promotes its binding to the 30S ribosomal subunits. Also involved in the hydrolysis of GTP during the formation of the 70S ribosomal complex. The polypeptide is Translation initiation factor IF-2 (infB) (Pasteurella multocida (strain Pm70)).